We begin with the raw amino-acid sequence, 387 residues long: Probable protein phosphatase 2C 25 (387 aa).

A PPM-type phosphatase domain is found at 52–351; that stretch reads EFSFAVVQAN…DDITVVVVYI (300 aa). Positions 83, 84, 283, and 342 each coordinate Mn(2+).

Belongs to the PP2C family. Mg(2+) serves as cofactor. It depends on Mn(2+) as a cofactor.

The catalysed reaction is O-phospho-L-seryl-[protein] + H2O = L-seryl-[protein] + phosphate. It catalyses the reaction O-phospho-L-threonyl-[protein] + H2O = L-threonyl-[protein] + phosphate. This chain is Probable protein phosphatase 2C 25, found in Oryza sativa subsp. japonica (Rice).